The following is a 177-amino-acid chain: Thymidine kinase (177 aa).

Position 11–18 (11–18 (GPMFSGKS)) interacts with ATP. Catalysis depends on glutamate 83, which acts as the Proton acceptor. Phenylalanine 113 contributes to the substrate binding site. Residues cysteine 138 and cysteine 141 each coordinate Zn(2+). 157–161 (IEIIG) serves as a coordination point for substrate. Residues cysteine 170 and cysteine 173 each contribute to the Zn(2+) site.

The protein belongs to the thymidine kinase family. As to quaternary structure, homotetramer. Two molecules of substrate bind to each enzyme tetramer.

It catalyses the reaction thymidine + ATP = dTMP + ADP + H(+). Its function is as follows. Phosphorylates thymidine and thymidine analogs, such as azidothymidine (AZT). Part of the salvage pathway for pyrimidine deoxyribonucleotide synthesis. This Vaccinia virus (strain Copenhagen) (VACV) protein is Thymidine kinase (OPG101).